The following is a 160-amino-acid chain: Protein cornichon homolog 2 (160 aa).

Residues Met1–Tyr10 lie on the Cytoplasmic side of the membrane. A helical membrane pass occupies residues Met11–Phe31. Topologically, residues Asp32–Tyr72 are lumenal. Residues Cys73–Leu93 form a helical membrane-spanning segment. The Cytoplasmic segment spans residues Asn94–Lys138. Residues Leu139 to Ser159 form a helical membrane-spanning segment. Residue Phe160 is a topological domain, lumenal.

Belongs to the cornichon family. As to quaternary structure, interacts with HBEGF. As to expression, expressed in the odd-numbered neuromeres (r3 and r5) of the developing hindbrain.

It localises to the membrane. Its function is as follows. Regulates the trafficking and gating properties of AMPA-selective glutamate receptors (AMPARs). Plays an important role in the proper development of cranial nerves by facilitating the secretion of HBEGF. The polypeptide is Protein cornichon homolog 2 (CNIH2) (Gallus gallus (Chicken)).